Here is a 650-residue protein sequence, read N- to C-terminus: Glycoprotein antigen BM86 (650 aa).

Residues 1–19 form the signal peptide; sequence MRGIALFVAAVSLIVEGTA. EGF-like domains follow at residues 20–66 and 67–104; these read ESSI…KQCE and YKDT…LQCK. 6 disulfide bridges follow: cysteine 24/cysteine 37, cysteine 32/cysteine 49, cysteine 51/cysteine 65, cysteine 71/cysteine 81, cysteine 76/cysteine 91, and cysteine 93/cysteine 103. N-linked (GlcNAc...) asparagine glycosylation is found at asparagine 141 and asparagine 182. EGF-like domains are found at residues 205 to 247, 251 to 292, and 291 to 335; these read CINA…ITCK, HTVS…DTCI, and CISD…NECL. 9 disulfides stabilise this stretch: cysteine 209–cysteine 222, cysteine 218–cysteine 231, cysteine 233–cysteine 246, cysteine 255–cysteine 269, cysteine 263–cysteine 278, cysteine 280–cysteine 291, cysteine 295–cysteine 307, cysteine 300–cysteine 316, and cysteine 318–cysteine 334. 2 N-linked (GlcNAc...) asparagine glycosylation sites follow: asparagine 348 and asparagine 382. EGF-like domains lie at 482 to 530 and 531 to 568; these read RRSV…IGCI and ERTT…HECY. Disulfide bonds link cysteine 486–cysteine 500, cysteine 492–cysteine 516, cysteine 518–cysteine 529, cysteine 535–cysteine 550, cysteine 543–cysteine 559, and cysteine 561–cysteine 567. Residues 603-628 are disordered; that stretch reads KSEATTAATTTTKAKDKDPDPGKSSA. A lipid anchor (GPI-anchor amidated serine) is attached at serine 627. Positions 628-650 are cleaved as a propeptide — removed in mature form; it reads AAAVSATGLLLLLAATSVTAASL.

The protein localises to the cell membrane. This Rhipicephalus microplus (Cattle tick) protein is Glycoprotein antigen BM86.